A 137-amino-acid chain; its full sequence is Putative pre-16S rRNA nuclease (137 aa).

Belongs to the YqgF nuclease family.

The protein localises to the cytoplasm. Functionally, could be a nuclease involved in processing of the 5'-end of pre-16S rRNA. The polypeptide is Putative pre-16S rRNA nuclease (Buchnera aphidicola subsp. Schizaphis graminum (strain Sg)).